A 106-amino-acid chain; its full sequence is Iron-sulfur cluster assembly protein CyaY (106 aa).

The protein belongs to the frataxin family.

Involved in iron-sulfur (Fe-S) cluster assembly. May act as a regulator of Fe-S biogenesis. This chain is Iron-sulfur cluster assembly protein CyaY, found in Yersinia pseudotuberculosis serotype O:3 (strain YPIII).